A 568-amino-acid polypeptide reads, in one-letter code: Periplasmic pectate lyase (568 aa).

A signal peptide spans 1 to 19 (MKRFALSLLAGLVALQASA).

The protein belongs to the polysaccharide lyase 2 family.

The protein localises to the periplasm. It catalyses the reaction Eliminative cleavage of (1-&gt;4)-alpha-D-galacturonan to give oligosaccharides with 4-deoxy-alpha-D-galact-4-enuronosyl groups at their non-reducing ends.. It participates in glycan metabolism; pectin degradation; 2-dehydro-3-deoxy-D-gluconate from pectin: step 2/5. This is Periplasmic pectate lyase (pelB) from Pectobacterium carotovorum subsp. carotovorum (Erwinia carotovora subsp. carotovora).